We begin with the raw amino-acid sequence, 523 residues long: MNNIHNHKILILDFGSQYTQLIARRIREIGVYCELWAWDVTEKQIREFNPTGIILSGGPESTTETNSPHAPEYVFKAGVPVLGICYGMQTMAMQLGGLTEASEQREFGYAAVELQHADQLFAKLNDDLTASQPKLDVWMSHGDKVTRLPAGFQTTAVTPTCPIAAMSDEKRRFYGVQFHPEVTHTKSGLALLTNFVENICGCARSWTPENIIEDAVAKIKQKVGNDQVILGLSGGVDSSVTALLLHRAIGKNLHCVFVDNGLLRLNEGDQVMEMFGDKFGLNIIRVNAEERFLEALKGIDEPEAKRKIIGKVFIDIFDDEAKKLTDVKWLAQGTIYPDVIESAASKTGKAHVIKSHHNVGGLPDYMKLGLVEPLRELFKDEVRKIGLTLGLPAEMLNRHPFPGPGLGVRVLGEIKKEYCDLLRNADAIFIEELYKSGWYYKVSQAFTVFLPVKSVGVMGDGRKYDWVVSLRAVETIDFMTAHWAHLPYELLGKISNRIINEVNGISRVVYDVSGKPPATIEWE.

Positions 8–205 (KILILDFGSQ…VENICGCARS (198 aa)) constitute a Glutamine amidotransferase type-1 domain. The Nucleophile role is filled by Cys85. Active-site residues include His179 and Glu181. The GMPS ATP-PPase domain occupies 206–398 (WTPENIIEDA…LGLPAEMLNR (193 aa)). 233 to 239 (SGGVDSS) is an ATP binding site.

As to quaternary structure, homodimer.

The enzyme catalyses XMP + L-glutamine + ATP + H2O = GMP + L-glutamate + AMP + diphosphate + 2 H(+). The protein operates within purine metabolism; GMP biosynthesis; GMP from XMP (L-Gln route): step 1/1. Its function is as follows. Catalyzes the synthesis of GMP from XMP. The polypeptide is GMP synthase [glutamine-hydrolyzing] (Haemophilus ducreyi (strain 35000HP / ATCC 700724)).